The sequence spans 301 residues: MGQKINPTGFRLAVSRNWASRWYASNRDFAGMLAEDIKVREYLKAKLKNAAVSRVLIERPAKNARITIFSARPGVVIGKKGEDIENLKKELSRQLGVPVAVNIEEVRKPEIDAKLIADSITQQLEKRIMFRRAMKRAMQNAMRLGALGIKIMSSGRLNGIEIARCEWYREGRVPLHTLRADIDYGTSEAKTTYGVIGVKVWVYKGDTLGRGESPGAKLDAAPSDEERKPRGPRRDARPGSDRPAPRGARAPRAPAGGTNTAPADGSDKPAEATPGSDAPKTTVKRVRKAAPAAAADGTKTE.

Residues 39–107 form the KH type-2 domain; that stretch reads VREYLKAKLK…PVAVNIEEVR (69 aa). Residues 211-301 are disordered; it reads GESPGAKLDA…AAAADGTKTE (91 aa). Residues 224 to 244 show a composition bias toward basic and acidic residues; the sequence is DEERKPRGPRRDARPGSDRPA. A compositionally biased stretch (low complexity) spans 245–257; sequence PRGARAPRAPAGG.

The protein belongs to the universal ribosomal protein uS3 family. Part of the 30S ribosomal subunit. Forms a tight complex with proteins S10 and S14.

Functionally, binds the lower part of the 30S subunit head. Binds mRNA in the 70S ribosome, positioning it for translation. The sequence is that of Small ribosomal subunit protein uS3 from Polaromonas sp. (strain JS666 / ATCC BAA-500).